Here is a 367-residue protein sequence, read N- to C-terminus: Ferrochelatase (367 aa).

His-213 and Glu-294 together coordinate Fe cation.

This sequence belongs to the ferrochelatase family.

It localises to the cytoplasm. It carries out the reaction heme b + 2 H(+) = protoporphyrin IX + Fe(2+). It participates in porphyrin-containing compound metabolism; protoheme biosynthesis; protoheme from protoporphyrin-IX: step 1/1. Functionally, catalyzes the ferrous insertion into protoporphyrin IX. The protein is Ferrochelatase of Polaromonas sp. (strain JS666 / ATCC BAA-500).